Consider the following 252-residue polypeptide: ATP synthase subunit a (252 aa).

The next 6 membrane-spanning stretches (helical) occupy residues 29–49, 87–107, 117–137, 146–166, 188–208, and 211–231; these read FTNS…FLFL, FFPL…LGLF, IIVT…YGFM, LFVP…IEVI, ITLK…AVGV, and SILP…VAFL.

It belongs to the ATPase A chain family. F-type ATPases have 2 components, CF(1) - the catalytic core - and CF(0) - the membrane proton channel. CF(1) has five subunits: alpha(3), beta(3), gamma(1), delta(1), epsilon(1). CF(0) has three main subunits: a(1), b(2) and c(9-12). The alpha and beta chains form an alternating ring which encloses part of the gamma chain. CF(1) is attached to CF(0) by a central stalk formed by the gamma and epsilon chains, while a peripheral stalk is formed by the delta and b chains.

The protein localises to the cell inner membrane. Functionally, key component of the proton channel; it plays a direct role in the translocation of protons across the membrane. The protein is ATP synthase subunit a of Mesorhizobium japonicum (strain LMG 29417 / CECT 9101 / MAFF 303099) (Mesorhizobium loti (strain MAFF 303099)).